The primary structure comprises 241 residues: Uridylate kinase (241 aa).

15-18 (KLSG) lines the ATP pocket. G57 lines the UMP pocket. ATP-binding residues include G58 and R62. UMP contacts are provided by residues D77 and 139 to 146 (IGHTLFTT). ATP contacts are provided by T166, N167, F172, and D175.

It belongs to the UMP kinase family. As to quaternary structure, homohexamer.

The protein localises to the cytoplasm. It carries out the reaction UMP + ATP = UDP + ADP. The protein operates within pyrimidine metabolism; CTP biosynthesis via de novo pathway; UDP from UMP (UMPK route): step 1/1. With respect to regulation, inhibited by UTP. In terms of biological role, catalyzes the reversible phosphorylation of UMP to UDP. The polypeptide is Uridylate kinase (Wigglesworthia glossinidia brevipalpis).